Here is a 470-residue protein sequence, read N- to C-terminus: Nuclear receptor subfamily 0 group B member 1 (470 aa).

A run of 3 repeats spans residues 1 to 67, 68 to 133, and 134 to 200. The segment at 1-253 is 4 X 67 AA tandem repeats; sequence MAGEDHQWQG…RPVALKNPQV (253 aa). Short sequence motifs (LXXLL motif) lie at residues 13-17, 80-84, and 146-150; these read LYNML, LYSML, and LYSLL. One copy of the 4; truncated repeat lies at 201-253; that stretch reads FCGEDQPQQGSTLYSMPTSTNQTPAAPEERPGAPWWDTSCGALRPVALKNPQV. The 265-residue stretch at 205 to 469 folds into the NR LBD domain; sequence DQPQQGSTLY…DMMLEMLCTK (265 aa). Residues 461–466 carry the AF-2 motif motif; sequence MMLEML.

The protein belongs to the nuclear hormone receptor family. NR0 subfamily. As to quaternary structure, homodimer. Interacts with NR5A1, NR5A2, NR0B2 and with COPS2. Interacts with ESRRB; represses ESRRB activity at the GATA6 promoter.

Its subcellular location is the nucleus. It is found in the cytoplasm. In terms of biological role, nuclear receptor that lacks a DNA-binding domain and acts as a corepressor that inhibits the transcriptional activity of other nuclear receptors through heterodimeric interactions. Component of a cascade required for the development of the hypothalamic-pituitary-adrenal-gonadal axis. May also have a role in the development of the embryo and in the maintenance of embryonic stem cell pluripotency. This chain is Nuclear receptor subfamily 0 group B member 1 (NR0B1), found in Callithrix jacchus (White-tufted-ear marmoset).